The following is a 263-amino-acid chain: Hatching enzyme 1.2 (263 aa).

The signal sequence occupies residues 1–19 (MDIRASLSILLLLFGLSQA). The propeptide at 20-64 (SPLREFEAIFVSEPETVDITTQILETNKGSSEVLFEGDVVLPKNR) is activation peptide. A Peptidase M12A domain is found at 65 to 263 (NALICEDKSC…ILRINKLYGC (199 aa)). Disulfide bonds link Cys-69/Cys-74, Cys-114/Cys-263, and Cys-135/Cys-155. Zn(2+) is bound at residue His-163. Glu-164 is a catalytic residue. His-167 and His-173 together coordinate Zn(2+).

The cofactor is Zn(2+). In terms of tissue distribution, expressed in cells of the hatching gland.

It is found in the secreted. The catalysed reaction is Hydrolysis of the inner layer of fish egg envelope. Also hydrolysis of casein and small molecule substrates such as succinyl-Leu-Leu-Val-Tyr-|-7-(4-methyl)coumarylamide.. Functionally, metalloendopeptidase which participates in the breakdown of the egg envelope at the time of hatching. Cleaves the N-terminal regions of the zona pellucia glycoproteins ZP2 and ZP3, where it specifically recognizes the peptide sequences TVQQS-|-DYLIK (major site) and KLMLK-|-APEPF (minor site). The chain is Hatching enzyme 1.2 from Danio rerio (Zebrafish).